The sequence spans 648 residues: Cell surface glycoprotein MUC18 (648 aa).

The first 23 residues, M1–G23, serve as a signal peptide directing secretion. Ig-like V-type domains lie at V24–E131 and P141–T244. At V24–V563 the chain is on the extracellular side. 5 disulfides stabilise this stretch: C50-C118, C163-C225, C274-C322, C367-C409, and C454-C501. A glycan (N-linked (GlcNAc...) asparagine) is linked at N58. Ig-like C2-type domains lie at P246–T332, P337–S426, and S432–T512. Positions Q281–N304 are disordered. N510 is a glycosylation site (N-linked (GlcNAc...) asparagine). A compositionally biased stretch (polar residues) spans T532–S549. A disordered region spans residues T532–L554. Residues I564 to F584 form a helical membrane-spanning segment. The Cytoplasmic segment spans residues Y585–H648. 2 positions are modified to phosphoserine: S608 and S616. The segment at L625 to H648 is disordered. Over residues G631–H648 the composition is skewed to basic and acidic residues.

In terms of tissue distribution, detected in melanoma cell lines.

The protein resides in the membrane. Functionally, plays a role in cell adhesion, and in cohesion of the endothelial monolayer at intercellular junctions in vascular tissue. Its expression may allow melanoma cells to interact with cellular elements of the vascular system, thereby enhancing hematogeneous tumor spread. Could be an adhesion molecule active in neural crest cells during embryonic development. Acts as a surface receptor that triggers tyrosine phosphorylation of FYN and PTK2/FAK1, and a transient increase in the intracellular calcium concentration. This chain is Cell surface glycoprotein MUC18 (Mcam), found in Mus musculus (Mouse).